The chain runs to 156 residues: Endogenous retrovirus group K member 9 Pro protein (156 aa).

The region spanning 21 to 96 (FEGLVDTGAD…IPLNLWGRDL (76 aa)) is the Peptidase A2 domain. The active site involves aspartate 26. The G-patch domain maps to 111–156 (YSPTSQKIMTKRGYIPGKGLGKNEDGIKIPFEAKINQKREGIGYPF).

The protein belongs to the peptidase A2 family. HERV class-II K(HML-2) subfamily. As to quaternary structure, active as a homodimer. Autoproteolytically processed at the N-terminus. Expected C-terminal autoprocessing not detected. The sequence shown is that of the processed Pro protein.

The catalysed reaction is Processing at the authentic HIV-1 PR recognition site and release of the mature p17 matrix and the p24 capsid protein, as a result of the cleavage of the -SQNY-|-PIVQ- cleavage site.. Its function is as follows. Retroviral proteases have roles in the processing of the primary translation products and the maturation of the viral particle. Endogenous Pro proteins may have kept, lost or modified their original function during evolution. The protein is Endogenous retrovirus group K member 9 Pro protein (ERVK-9) of Homo sapiens (Human).